Consider the following 203-residue polypeptide: Holliday junction branch migration complex subunit RuvA (203 aa).

A domain I region spans residues 1–64; it reads MIGRLRGIIL…EDAQLLYGFN (64 aa). The domain II stretch occupies residues 65 to 142; the sequence is NKQERTLFKE…KGLHGDLFTP (78 aa). The tract at residues 143–154 is flexible linker; the sequence is AVDLVLTSPASP. The segment at 155 to 203 is domain III; sequence TSEDAEQEAVAALVALGYKPQEASRMVNKIARPDASSETLIRDALRAAL.

Belongs to the RuvA family. In terms of assembly, homotetramer. Forms an RuvA(8)-RuvB(12)-Holliday junction (HJ) complex. HJ DNA is sandwiched between 2 RuvA tetramers; dsDNA enters through RuvA and exits via RuvB. An RuvB hexamer assembles on each DNA strand where it exits the tetramer. Each RuvB hexamer is contacted by two RuvA subunits (via domain III) on 2 adjacent RuvB subunits; this complex drives branch migration. In the full resolvosome a probable DNA-RuvA(4)-RuvB(12)-RuvC(2) complex forms which resolves the HJ.

It is found in the cytoplasm. Its function is as follows. The RuvA-RuvB-RuvC complex processes Holliday junction (HJ) DNA during genetic recombination and DNA repair, while the RuvA-RuvB complex plays an important role in the rescue of blocked DNA replication forks via replication fork reversal (RFR). RuvA specifically binds to HJ cruciform DNA, conferring on it an open structure. The RuvB hexamer acts as an ATP-dependent pump, pulling dsDNA into and through the RuvAB complex. HJ branch migration allows RuvC to scan DNA until it finds its consensus sequence, where it cleaves and resolves the cruciform DNA. The polypeptide is Holliday junction branch migration complex subunit RuvA (Salmonella choleraesuis (strain SC-B67)).